A 125-amino-acid polypeptide reads, in one-letter code: Ribosome-binding factor A (125 aa).

This sequence belongs to the RbfA family. As to quaternary structure, monomer. Binds 30S ribosomal subunits, but not 50S ribosomal subunits or 70S ribosomes.

The protein localises to the cytoplasm. Functionally, one of several proteins that assist in the late maturation steps of the functional core of the 30S ribosomal subunit. Associates with free 30S ribosomal subunits (but not with 30S subunits that are part of 70S ribosomes or polysomes). Required for efficient processing of 16S rRNA. May interact with the 5'-terminal helix region of 16S rRNA. The protein is Ribosome-binding factor A of Thermosipho melanesiensis (strain DSM 12029 / CIP 104789 / BI429).